The following is a 503-amino-acid chain: Catalase (503 aa).

The first 21 residues, 1 to 21, serve as a signal peptide directing secretion; the sequence is MHMSKSFLIISMGFVAVSVQA. Residues H72 and N145 contribute to the active site. Position 353 (Y353) interacts with heme.

The protein belongs to the catalase family. Requires heme as cofactor.

The protein resides in the periplasm. It catalyses the reaction 2 H2O2 = O2 + 2 H2O. In terms of biological role, decomposes hydrogen peroxide into water and oxygen; serves to protect cells from the toxic effects of hydrogen peroxide. This is Catalase from Vibrio cholerae serotype O1 (strain ATCC 39315 / El Tor Inaba N16961).